We begin with the raw amino-acid sequence, 191 residues long: Probable DNA-directed RNA polymerase subunit delta (191 aa).

The HTH HARE-type domain maps to 14-83 (LSMIEVARAI…GENKWGLRSW (70 aa)). Residues 118–191 (DEDAIDYRDD…EDEEDEEPVL (74 aa)) form a disordered region.

This sequence belongs to the RpoE family. In terms of assembly, RNAP is composed of a core of 2 alpha, a beta and a beta' subunits. The core is associated with a delta subunit and one of several sigma factors.

Its function is as follows. Participates in both the initiation and recycling phases of transcription. In the presence of the delta subunit, RNAP displays an increased specificity of transcription, a decreased affinity for nucleic acids, and an increased efficiency of RNA synthesis because of enhanced recycling. In Streptococcus pyogenes serotype M18 (strain MGAS8232), this protein is Probable DNA-directed RNA polymerase subunit delta.